The chain runs to 277 residues: Ubiquinone biosynthesis protein COQ4, mitochondrial (277 aa).

Residues 1-14 (MLTKRALRTTDPYR) constitute a mitochondrion transit peptide. Residues H157, D158, H161, and E173 each contribute to the Zn(2+) site.

The protein belongs to the COQ4 family. As to quaternary structure, component of a multi-subunit COQ enzyme complex, composed of at least COQ3, COQ4, COQ5, COQ6, COQ7 and COQ9. Zn(2+) serves as cofactor.

The protein resides in the mitochondrion inner membrane. The catalysed reaction is a 4-hydroxy-3-methoxy-5-(all-trans-polyprenyl)benzoate + H(+) = a 2-methoxy-6-(all-trans-polyprenyl)phenol + CO2. It participates in cofactor biosynthesis; ubiquinone biosynthesis. Functionally, lyase that catalyzes the C1-decarboxylation of 4-hydroxy-3-methoxy-5-(all-trans-polyprenyl)benzoic acid into 2-methoxy-6-(all-trans-polyprenyl)phenol during ubiquinone biosynthesis. This is Ubiquinone biosynthesis protein COQ4, mitochondrial from Ajellomyces capsulatus (strain NAm1 / WU24) (Darling's disease fungus).